The primary structure comprises 402 residues: Zinc finger CCCH domain-containing protein 35 (402 aa).

2 consecutive C3H1-type zinc fingers follow at residues 117–144 (CYSG…HGVF) and 152–176 (RYRT…HTPD). Disordered regions lie at residues 180–211 (VLPP…AESY) and 232–258 (SSPT…DAAG). Positions 183-192 (PSQQQGSNSP) are enriched in polar residues. Over residues 232–241 (SSPTSTLVSP) the composition is skewed to low complexity. Residues 242-253 (PRSPPSESPPLS) are compositionally biased toward pro residues.

The sequence is that of Zinc finger CCCH domain-containing protein 35 from Oryza sativa subsp. japonica (Rice).